Here is a 505-residue protein sequence, read N- to C-terminus: Glucose-6-phosphate 1-dehydrogenase (505 aa).

Serine 2 is modified (N-acetylserine). NADP(+) contacts are provided by residues 18–25 (GASGDLAK) and arginine 52. At serine 142 the chain carries Phosphoserine. Tyrosine 145 carries the post-translational modification Phosphotyrosine. An NADP(+)-binding site is contributed by lysine 157. D-glucose 6-phosphate is bound by residues lysine 157, 187-191 (HYLGK), glutamate 225, and aspartate 244. Histidine 249 functions as the Proton acceptor in the catalytic mechanism. Residue arginine 340 participates in NADP(+) binding. A D-glucose 6-phosphate-binding site is contributed by lysine 343. 3 residues coordinate NADP(+): lysine 349, arginine 353, and arginine 375. Glutamine 377 serves as a coordination point for D-glucose 6-phosphate. Residues 383–385 (YLK) and arginine 470 each bind NADP(+).

The protein belongs to the glucose-6-phosphate dehydrogenase family.

The enzyme catalyses D-glucose 6-phosphate + NADP(+) = 6-phospho-D-glucono-1,5-lactone + NADPH + H(+). It participates in carbohydrate degradation; pentose phosphate pathway; D-ribulose 5-phosphate from D-glucose 6-phosphate (oxidative stage): step 1/3. Functionally, catalyzes the rate-limiting step of the oxidative pentose-phosphate pathway, which represents a route for the dissimilation of carbohydrates besides glycolysis. The main function of this enzyme is to provide reducing power (NADPH) and pentose phosphates for fatty acid and nucleic acid synthesis. This Saccharomyces cerevisiae (strain ATCC 204508 / S288c) (Baker's yeast) protein is Glucose-6-phosphate 1-dehydrogenase (ZWF1).